The primary structure comprises 143 residues: Ribosome-binding factor A (143 aa).

The segment at 123–143 (DKSLQENYKQNDKETKAEKLR) is disordered.

This sequence belongs to the RbfA family. As to quaternary structure, monomer. Binds 30S ribosomal subunits, but not 50S ribosomal subunits or 70S ribosomes.

The protein localises to the cytoplasm. One of several proteins that assist in the late maturation steps of the functional core of the 30S ribosomal subunit. Associates with free 30S ribosomal subunits (but not with 30S subunits that are part of 70S ribosomes or polysomes). Required for efficient processing of 16S rRNA. May interact with the 5'-terminal helix region of 16S rRNA. This is Ribosome-binding factor A from Francisella tularensis subsp. mediasiatica (strain FSC147).